The sequence spans 391 residues: S-adenosylmethionine synthase (391 aa).

Histidine 14 serves as a coordination point for ATP. Aspartate 16 lines the Mg(2+) pocket. Glutamate 42 serves as a coordination point for K(+). 2 residues coordinate L-methionine: glutamate 55 and glutamine 98. A flexible loop region spans residues 98–108; it reads QSPDIAMGVDE. Residues 172–174, 238–239, aspartate 247, 253–254, alanine 270, and lysine 274 contribute to the ATP site; these read DGK, RF, and RK. An L-methionine-binding site is contributed by aspartate 247. Residue lysine 278 coordinates L-methionine.

It belongs to the AdoMet synthase family. As to quaternary structure, homotetramer; dimer of dimers. It depends on Mg(2+) as a cofactor. The cofactor is K(+).

Its subcellular location is the cytoplasm. The catalysed reaction is L-methionine + ATP + H2O = S-adenosyl-L-methionine + phosphate + diphosphate. The protein operates within amino-acid biosynthesis; S-adenosyl-L-methionine biosynthesis; S-adenosyl-L-methionine from L-methionine: step 1/1. Functionally, catalyzes the formation of S-adenosylmethionine (AdoMet) from methionine and ATP. The overall synthetic reaction is composed of two sequential steps, AdoMet formation and the subsequent tripolyphosphate hydrolysis which occurs prior to release of AdoMet from the enzyme. This Clostridium tetani (strain Massachusetts / E88) protein is S-adenosylmethionine synthase.